A 354-amino-acid chain; its full sequence is Cytoplasmic tRNA 2-thiolation protein 1 (354 aa).

It belongs to the TtcA family. CTU1/NCS6/ATPBD3 subfamily.

It localises to the cytoplasm. It participates in tRNA modification; 5-methoxycarbonylmethyl-2-thiouridine-tRNA biosynthesis. In terms of biological role, plays a central role in 2-thiolation of mcm(5)S(2)U at tRNA wobble positions of tRNA(Lys), tRNA(Glu) and tRNA(Gln). Directly binds tRNAs and probably acts by catalyzing adenylation of tRNAs, an intermediate required for 2-thiolation. It is unclear whether it acts as a sulfurtransferase that transfers sulfur from thiocarboxylated URM1 onto the uridine of tRNAs at wobble position. Prior mcm(5) tRNA modification by the elongator complex is required for 2-thiolation. May also be involved in protein urmylation. The chain is Cytoplasmic tRNA 2-thiolation protein 1 from Laccaria bicolor (strain S238N-H82 / ATCC MYA-4686) (Bicoloured deceiver).